Consider the following 115-residue polypeptide: MKTIIVFLSLLVLATKFGDAKEGVNQKQKKEVTQNEFREEYLNEMAAMSLVQQLEAIERALFENEAGRNSRQKRCLGENVPCGDNIPCCGKLACEKTAGYGWWYKSPYCVKPTSG.

The first 20 residues, 1-20 (MKTIIVFLSLLVLATKFGDA), serve as a signal peptide directing secretion. The propeptide occupies 21–74 (KEGVNQKQKKEVTQNEFREEYLNEMAAMSLVQQLEAIERALFENEAGRNSRQKR). Intrachain disulfides connect Cys-75-Cys-89, Cys-82-Cys-94, and Cys-88-Cys-109.

This sequence belongs to the neurotoxin 14 (magi-1) family. 03 (ICK-30-40) subfamily. In terms of tissue distribution, expressed by the venom gland.

It localises to the secreted. In terms of biological role, ion channel inhibitor. In Trittame loki (Brush-footed trapdoor spider), this protein is U17-barytoxin-Tl1b.